Consider the following 265-residue polypeptide: Glutamate racemase (265 aa).

Substrate contacts are provided by residues 9-10 (DS) and 41-42 (YS). The active-site Proton donor/acceptor is Cys-73. Substrate is bound at residue 74–75 (NT). The active-site Proton donor/acceptor is Cys-184. 185–186 (TH) serves as a coordination point for substrate.

This sequence belongs to the aspartate/glutamate racemases family.

It carries out the reaction L-glutamate = D-glutamate. It functions in the pathway cell wall biogenesis; peptidoglycan biosynthesis. Provides the (R)-glutamate required for cell wall biosynthesis. This chain is Glutamate racemase, found in Actinobacillus pleuropneumoniae serotype 5b (strain L20).